The chain runs to 284 residues: Formamidopyrimidine-DNA glycosylase (284 aa).

Residue Pro2 is the Schiff-base intermediate with DNA of the active site. The Proton donor role is filled by Glu3. Lys60 (proton donor; for beta-elimination activity) is an active-site residue. DNA-binding residues include His94 and Arg113. The segment at 243–277 (WVYGRKGEACRVCGTTIERLRLAGRSSHYCPQCQP) adopts an FPG-type zinc-finger fold. The active-site Proton donor; for delta-elimination activity is the Arg267.

It belongs to the FPG family. As to quaternary structure, monomer. Requires Zn(2+) as cofactor.

The catalysed reaction is Hydrolysis of DNA containing ring-opened 7-methylguanine residues, releasing 2,6-diamino-4-hydroxy-5-(N-methyl)formamidopyrimidine.. It carries out the reaction 2'-deoxyribonucleotide-(2'-deoxyribose 5'-phosphate)-2'-deoxyribonucleotide-DNA = a 3'-end 2'-deoxyribonucleotide-(2,3-dehydro-2,3-deoxyribose 5'-phosphate)-DNA + a 5'-end 5'-phospho-2'-deoxyribonucleoside-DNA + H(+). Its function is as follows. Involved in base excision repair of DNA damaged by oxidation or by mutagenic agents. Acts as a DNA glycosylase that recognizes and removes damaged bases. Has a preference for oxidized purines, such as 7,8-dihydro-8-oxoguanine (8-oxoG). Has AP (apurinic/apyrimidinic) lyase activity and introduces nicks in the DNA strand. Cleaves the DNA backbone by beta-delta elimination to generate a single-strand break at the site of the removed base with both 3'- and 5'-phosphates. In Synechococcus elongatus, this protein is Formamidopyrimidine-DNA glycosylase (mutM).